The primary structure comprises 446 residues: UDP-N-acetylmuramoylalanine--D-glutamate ligase (446 aa).

116–122 is an ATP binding site; sequence GSNGKTT.

The protein belongs to the MurCDEF family.

The protein localises to the cytoplasm. The catalysed reaction is UDP-N-acetyl-alpha-D-muramoyl-L-alanine + D-glutamate + ATP = UDP-N-acetyl-alpha-D-muramoyl-L-alanyl-D-glutamate + ADP + phosphate + H(+). Its pathway is cell wall biogenesis; peptidoglycan biosynthesis. In terms of biological role, cell wall formation. Catalyzes the addition of glutamate to the nucleotide precursor UDP-N-acetylmuramoyl-L-alanine (UMA). This Marinobacter nauticus (strain ATCC 700491 / DSM 11845 / VT8) (Marinobacter aquaeolei) protein is UDP-N-acetylmuramoylalanine--D-glutamate ligase.